The chain runs to 1770 residues: NEDD4-binding protein 2 (1770 aa).

Positions 1–40 are disordered; the sequence is MPRRRKNLGGNPFRKTANPKEVVVSSVASREEPTTTLPSM. A CUE domain is found at 46 to 89; it reads DQEELFTSISEIFSDLDPDVVYLMLSECDFKVENAMDCLLELSA. 2 coiled-coil regions span residues 90 to 177 and 218 to 259; these read TDTK…NDSS and HSVL…IAGC. The tract at residues 95–129 is disordered; the sequence is EESSSQSFVASENQVGAAESKIMEKRPEEESEDSK. A compositionally biased stretch (polar residues) spans 97–108; that stretch reads SSSQSFVASENQ. Basic and acidic residues predominate over residues 115-129; sequence KIMEKRPEEESEDSK. 447–454 serves as a coordination point for ATP; that stretch reads GLPGSGKS. 4 disordered regions span residues 712–756, 795–822, 836–862, and 890–913; these read SKTD…GEIV, KTIG…YNYP, DCVQ…ASEP, and SLAQ…LEIG. A compositionally biased stretch (basic and acidic residues) spans 843–856; the sequence is SPHESVEDGRKSQC. Serine 906 is subject to Phosphoserine. Threonine 1210 is subject to Phosphothreonine. The tract at residues 1580–1606 is disordered; sequence NENVTSHTGQKSKEKKPKKLKETEETP. Positions 1691–1770 constitute a Smr domain; the sequence is LDLHGLHVDE…KPGCLKVMLK (80 aa).

As to quaternary structure, binds NEDD4. Binds BCL3 and CREBBP. In terms of processing, ubiquitinated; this targets the protein for degradation by the proteasome.

It is found in the cytoplasm. Has 5'-polynucleotide kinase and nicking endonuclease activity. May play a role in DNA repair or recombination. This Homo sapiens (Human) protein is NEDD4-binding protein 2 (N4BP2).